Consider the following 417-residue polypeptide: Serine hydroxymethyltransferase (417 aa).

(6S)-5,6,7,8-tetrahydrofolate is bound by residues Leu122 and 126 to 128 (GHL). Lys230 is subject to N6-(pyridoxal phosphate)lysine. 355–357 (SPF) lines the (6S)-5,6,7,8-tetrahydrofolate pocket.

This sequence belongs to the SHMT family. As to quaternary structure, homodimer. The cofactor is pyridoxal 5'-phosphate.

The protein resides in the cytoplasm. The catalysed reaction is (6R)-5,10-methylene-5,6,7,8-tetrahydrofolate + glycine + H2O = (6S)-5,6,7,8-tetrahydrofolate + L-serine. It participates in one-carbon metabolism; tetrahydrofolate interconversion. The protein operates within amino-acid biosynthesis; glycine biosynthesis; glycine from L-serine: step 1/1. Catalyzes the reversible interconversion of serine and glycine with tetrahydrofolate (THF) serving as the one-carbon carrier. This reaction serves as the major source of one-carbon groups required for the biosynthesis of purines, thymidylate, methionine, and other important biomolecules. Also exhibits THF-independent aldolase activity toward beta-hydroxyamino acids, producing glycine and aldehydes, via a retro-aldol mechanism. In Francisella tularensis subsp. holarctica (strain LVS), this protein is Serine hydroxymethyltransferase.